The following is a 230-amino-acid chain: Orotidine 5'-phosphate decarboxylase (230 aa).

Residues D10, K32, 59–68 (DLKYHDIPNT), T119, R180, Q189, G209, and R210 each bind substrate. K61 (proton donor) is an active-site residue.

Belongs to the OMP decarboxylase family. Type 1 subfamily. As to quaternary structure, homodimer.

It carries out the reaction orotidine 5'-phosphate + H(+) = UMP + CO2. Its pathway is pyrimidine metabolism; UMP biosynthesis via de novo pathway; UMP from orotate: step 2/2. Its function is as follows. Catalyzes the decarboxylation of orotidine 5'-monophosphate (OMP) to uridine 5'-monophosphate (UMP). This is Orotidine 5'-phosphate decarboxylase from Haemophilus ducreyi (strain 35000HP / ATCC 700724).